The following is a 614-amino-acid chain: 1-deoxy-D-xylulose-5-phosphate synthase (614 aa).

Thiamine diphosphate is bound by residues His-74 and 115-117 (GHS). Asp-146 is a binding site for Mg(2+). Thiamine diphosphate-binding positions include 147-148 (GA), Asn-175, Tyr-282, and Glu-363. Asn-175 provides a ligand contact to Mg(2+).

It belongs to the transketolase family. DXPS subfamily. In terms of assembly, homodimer. The cofactor is Mg(2+). Thiamine diphosphate is required as a cofactor.

It carries out the reaction D-glyceraldehyde 3-phosphate + pyruvate + H(+) = 1-deoxy-D-xylulose 5-phosphate + CO2. Its pathway is metabolic intermediate biosynthesis; 1-deoxy-D-xylulose 5-phosphate biosynthesis; 1-deoxy-D-xylulose 5-phosphate from D-glyceraldehyde 3-phosphate and pyruvate: step 1/1. Functionally, catalyzes the acyloin condensation reaction between C atoms 2 and 3 of pyruvate and glyceraldehyde 3-phosphate to yield 1-deoxy-D-xylulose-5-phosphate (DXP). The chain is 1-deoxy-D-xylulose-5-phosphate synthase from Methylobacillus flagellatus (strain ATCC 51484 / DSM 6875 / VKM B-1610 / KT).